A 165-amino-acid chain; its full sequence is Probable cell wall protein PGA15 (165 aa).

Residues M1 to A16 form the signal peptide. S143 carries GPI-anchor amidated serine lipidation. The propeptide at G144–I165 is removed in mature form.

Belongs to the IHD1 family. Post-translationally, the GPI-anchor is attached to the protein in the endoplasmic reticulum and serves to target the protein to the cell surface. There, the glucosamine-inositol phospholipid moiety is cleaved off and the GPI-modified mannoprotein is covalently attached via its lipidless GPI glycan remnant to the 1,6-beta-glucan of the outer cell wall layer.

Its subcellular location is the secreted. It is found in the cell wall. The protein resides in the membrane. In terms of biological role, probable GPI-anchored cell wall protein that may be involved in cell wall organization, hyphal growth, as well as in virulence. This Candida albicans (strain SC5314 / ATCC MYA-2876) (Yeast) protein is Probable cell wall protein PGA15 (PGA15).